The following is a 262-amino-acid chain: 5'-nucleotidase SurE (262 aa).

Residues Asp11, Asp12, Ser43, and Asn101 each contribute to the a divalent metal cation site. The span at Ser220 to Pro229 shows a compositional bias: basic and acidic residues. A disordered region spans residues Ser220 to Gln246. Over residues Asp231 to Pro244 the composition is skewed to polar residues.

Belongs to the SurE nucleotidase family. Requires a divalent metal cation as cofactor.

It is found in the cytoplasm. It carries out the reaction a ribonucleoside 5'-phosphate + H2O = a ribonucleoside + phosphate. Nucleotidase that shows phosphatase activity on nucleoside 5'-monophosphates. This Prochlorococcus marinus (strain SARG / CCMP1375 / SS120) protein is 5'-nucleotidase SurE.